The sequence spans 513 residues: Lysine--tRNA ligase (513 aa).

Mg(2+) is bound by residues Glu423 and Glu430.

Belongs to the class-II aminoacyl-tRNA synthetase family. In terms of assembly, homodimer. Mg(2+) is required as a cofactor.

The protein resides in the cytoplasm. It carries out the reaction tRNA(Lys) + L-lysine + ATP = L-lysyl-tRNA(Lys) + AMP + diphosphate. This is Lysine--tRNA ligase from Anaeromyxobacter dehalogenans (strain 2CP-1 / ATCC BAA-258).